Reading from the N-terminus, the 2477-residue chain is Spectrin alpha chain, non-erythrocytic 1 (2477 aa).

Residues 1-14 (MDPSGVKVLETAED) form an N-terminal domain region. Spectrin repeat units follow at residues 45–146 (RFQF…VKLL), 150–251 (KLVQ…QGKL), 256–358 (EVQR…ARLN), 361–465 (YRLQ…QYEQ), 468–570 (DLQL…AQLA), 574–676 (HLQQ…KLRE), 679–781 (QQQQ…QKLA), 785–888 (RLQQ…DLED), 891–969 (QAQQ…ETGK), and 1096–1162 (LFRE…SEGL). Residues 967 to 1026 (TGKELVLALYDYQEKSPREVTMKKGDILTLLNSTNKDWWKVEVNDRQGFVPAAYVKKLDP) enclose the SH3 domain. A Phosphotyrosine modification is found at tyrosine 1176. 10 Spectrin repeats span residues 1234–1336 (EVQR…EKLG), 1339–1442 (HDLQ…MMLD), 1446–1549 (ELQL…KLGE), 1552–1661 (TLQQ…KLKE), 1664–1767 (KQQN…KLNE), 1769–1873 (HRLH…RLEE), 1876–1979 (EYQQ…KLDE), 1983–2086 (FLQF…KLLE), 2097–2199 (LFLT…LELQ), and 2211–2315 (LRQE…NLEQ). A C-terminal domain region spans residues 2257 to 2477 (HQEIRAMRSQ…IEFTRSLFVN (221 aa)). 3 consecutive EF-hand domains span residues 2328 to 2363 (EALK…LGYD), 2371 to 2406 (EPDP…RETE), and 2409 to 2444 (KSSE…EQAD). Positions 2341, 2343, 2345, 2347, 2352, 2384, 2386, 2388, 2390, and 2395 each coordinate Ca(2+).

It belongs to the spectrin family. In terms of assembly, like erythrocyte spectrin, the spectrin-like proteins are capable of forming dimers which can further associate to tetramers. Interacts with ACP1. Post-translationally, phosphorylation of Tyr-1176 decreases sensitivity to cleavage by calpain in vitro.

Its subcellular location is the cytoplasm. The protein localises to the cytoskeleton. The protein resides in the cell cortex. In terms of biological role, morphologically, spectrin-like proteins appear to be related to spectrin, showing a flexible rod-like structure. They can bind actin but seem to differ in their calmodulin-binding activity. In nonerythroid tissues, spectrins, in association with some other proteins, may play an important role in membrane organization. The chain is Spectrin alpha chain, non-erythrocytic 1 (SPTAN1) from Gallus gallus (Chicken).